A 579-amino-acid chain; its full sequence is Protein downstream neighbor of son homolog (579 aa).

2 disordered regions span residues 1-68 (MAEL…RRNP) and 331-379 (FSQP…DESF). Basic and acidic residues predominate over residues 339–348 (DTGKKQKKPE). Over residues 365–378 (EADEASDESDEDES) the composition is skewed to acidic residues.

The protein belongs to the DONSON family. Component of the replisome complex.

The protein localises to the nucleus. Replisome component that maintains genome stability by protecting stalled or damaged replication forks. After the induction of replication stress, required for the stabilization of stalled replication forks, the efficient activation of the intra-S-phase and G/2M cell-cycle checkpoints and the maintenance of genome stability. This Xenopus laevis (African clawed frog) protein is Protein downstream neighbor of son homolog.